A 367-amino-acid chain; its full sequence is NADH-quinone oxidoreductase subunit D (367 aa).

The protein belongs to the complex I 49 kDa subunit family. NDH-1 is composed of 14 different subunits. Subunits NuoB, C, D, E, F, and G constitute the peripheral sector of the complex.

The protein resides in the cell membrane. It catalyses the reaction a quinone + NADH + 5 H(+)(in) = a quinol + NAD(+) + 4 H(+)(out). In terms of biological role, NDH-1 shuttles electrons from NADH, via FMN and iron-sulfur (Fe-S) centers, to quinones in the respiratory chain. The immediate electron acceptor for the enzyme in this species is believed to be ubiquinone. Couples the redox reaction to proton translocation (for every two electrons transferred, four hydrogen ions are translocated across the cytoplasmic membrane), and thus conserves the redox energy in a proton gradient. This chain is NADH-quinone oxidoreductase subunit D, found in Dehalococcoides mccartyi (strain ATCC BAA-2100 / JCM 16839 / KCTC 5957 / BAV1).